The primary structure comprises 103 residues: METVQELIPLAKEMMAQKRKGKMVKLYVLGSVLALFGVVLGLMETVCSPFTAARRLRDQEAAVAELQAALERQALQKQALQEKGKQQDTVLGGRALSNRQHAS.

The segment at 80–103 (LQEKGKQQDTVLGGRALSNRQHAS) is disordered.

As to quaternary structure, directly interacts with BCL2; this interaction prevents the formation of the anti-apoptotic BAX-BCL2 complex. As to expression, widely expressed with highest levels in peripheral blood, skeletal muscle and heart, followed by kidney and liver.

Its subcellular location is the mitochondrion. In terms of biological role, promotes apoptosis by binding to BCL2, hence preventing the formation of protective BCL2-BAX heterodimers. This Homo sapiens (Human) protein is G0/G1 switch protein 2 (G0S2).